A 224-amino-acid polypeptide reads, in one-letter code: MAITDWPEEQRPRERLIRHGAAILSDAELLAVFLRVGVTGKSAVDLGRDMVAHFGSLNGLFSATLNDFSKINGLGPAKYAQLQAVLELARRSLCEELQAGVALNSPQAVKQYLQLLLSGRAYESFVILFLDVKNRLIVCDEMFRGTLTHTSVYPREIVKAALGHNAASVILAHNHPSGTPEPSAADQTLTQALKQALMLIDVRVLDHFVVAGKQVYSFAEQGQL.

The region spanning 102-224 (ALNSPQAVKQ…VYSFAEQGQL (123 aa)) is the MPN domain. Zn(2+) contacts are provided by His173, His175, and Asp186. Residues 173–186 (HNHPSGTPEPSAAD) carry the JAMM motif motif.

This sequence belongs to the UPF0758 family.

The protein is UPF0758 protein HEAR2468 of Herminiimonas arsenicoxydans.